The sequence spans 223 residues: Homeobox protein egl-5 (223 aa).

The segment covering 1-25 (MNTSTSAFDFGSSTASSAATSTTSS) has biased composition (low complexity). 2 disordered regions span residues 1-58 (MNTS…STEA) and 168-191 (KKEKQRVDDHTEHTPLLPANPPKG). Positions 112-171 (SKKGRQTYQRYQTSVLEAKFQQSSYVSKKQREELRLQTQLTDRQIKIWFQNRRMKAKKEK) form a DNA-binding region, homeobox.

It belongs to the Abd-B homeobox family. Interacts with the TCF transcription factor pop-1.

The protein localises to the nucleus. Its function is as follows. Involved in control of cell fate and pattern formation along the anterior-posterior axis, acting mainly in the tail. Required during embryonic and postembryonic development. Essential for the determination of specific neurons, including the PLM touch neurons. Plays a role in neural fate specification in the hermaphrodite-specific neuron (HSN)/PHB neuron lineage, acting in concert with T-box protein tbx-2 and the asymmetric cell division protein ham-1. Required for male gonadal fate determination, acting in parallel with a WNT/beta-catenin pathway, perhaps by recruiting pop-1 to male-specific gonadal target genes. Involved in development of the hermaphrodite hindgut, and for the response to rectal infection by the coryneform bacterium M.nematophilum. The polypeptide is Homeobox protein egl-5 (Caenorhabditis elegans).